Reading from the N-terminus, the 206-residue chain is Probable thymidylate kinase (206 aa).

10–17 (GIDGSGKS) contacts ATP.

This sequence belongs to the thymidylate kinase family.

It carries out the reaction dTMP + ATP = dTDP + ADP. The protein is Probable thymidylate kinase of Methanosarcina mazei (strain ATCC BAA-159 / DSM 3647 / Goe1 / Go1 / JCM 11833 / OCM 88) (Methanosarcina frisia).